The sequence spans 175 residues: uncharacterized protein (175 aa).

The N-terminal 11 residues, 1 to 11 (METWRKGSFRN), are a transit peptide targeting the mitochondrion. The tract at residues 29-48 (QGSILSQASTAGGDHEEYSN) is disordered.

The protein resides in the mitochondrion. This is an uncharacterized protein from Mus musculus (Mouse).